A 172-amino-acid chain; its full sequence is Signal peptidase complex catalytic subunit SEC11 (172 aa).

Over Met-1 to Gln-14 the chain is Cytoplasmic. Residues Leu-15–Ile-35 form a helical; Signal-anchor for type II membrane protein membrane-spanning segment. The Lumenal portion of the chain corresponds to Thr-36–Glu-172. Catalysis depends on charge relay system residues Ser-49 and His-90. Residue Asn-111 is glycosylated (N-linked (GlcNAc...) asparagine). Residue Asp-115 is the Charge relay system of the active site. The interval Val-158 to Leu-169 is C-terminal short (CTS) helix.

This sequence belongs to the peptidase S26B family. As to quaternary structure, component of the signal peptidase complex (SPC) composed of a catalytic subunit SEC11 and three accessory subunits SPC1, SPC2 and SPC3. The complex induces a local thinning of the ER membrane which is used to measure the length of the signal peptide (SP) h-region of protein substrates. This ensures the selectivity of the complex towards h-regions shorter than 18-20 amino acids. SPC associates with the translocon complex.

It localises to the endoplasmic reticulum membrane. The enzyme catalyses Cleavage of hydrophobic, N-terminal signal or leader sequences from secreted and periplasmic proteins.. Catalytic component of the signal peptidase complex (SPC) which catalyzes the cleavage of N-terminal signal sequences from nascent proteins as they are translocated into the lumen of the endoplasmic reticulum. Specifically cleaves N-terminal signal peptides that contain a hydrophobic alpha-helix (h-region) shorter than 18-20 amino acids. The chain is Signal peptidase complex catalytic subunit SEC11 (SEC11) from Fusarium vanettenii (strain ATCC MYA-4622 / CBS 123669 / FGSC 9596 / NRRL 45880 / 77-13-4) (Fusarium solani subsp. pisi).